Consider the following 461-residue polypeptide: Protein ultraspiracle homolog (461 aa).

A modulating region spans residues 1 to 112 (MSSVAKKDKR…NHPLSGSKHL (112 aa)). The disordered stretch occupies residues 26–51 (PAPHQQQSMPSSQPSNFLQPLATPST). The span at 27–40 (APHQQQSMPSSQPS) shows a compositional bias: low complexity. Residues 41–51 (NFLQPLATPST) show a composition bias toward polar residues. 2 NR C4-type zinc fingers span residues 113-133 (CSICGDRASGKHYGVYSCEGC) and 149-173 (CREDRNCIIDKRQRNRCQYCRYQKC). A DNA-binding region (nuclear receptor) is located at residues 113–185 (CSICGDRASG…CGMKREAVQE (73 aa)). The segment at 185 to 192 (EERQRAAR) is hinge. Residues 203-452 (VQELSIERLL…SYIHDALRNH (250 aa)) form the NR LBD domain.

It belongs to the nuclear hormone receptor family. NR2 subfamily. In terms of assembly, heterodimer of USP and ECR. Only the heterodimer is capable of high-affinity binding to ecdysone.

The protein resides in the nucleus. In terms of biological role, receptor for ecdysone. May be an important modulator of insect metamorphosis. The sequence is that of Protein ultraspiracle homolog (USP) from Manduca sexta (Tobacco hawkmoth).